We begin with the raw amino-acid sequence, 482 residues long: Adenylosuccinate lyase (482 aa).

Residues Arg-14–Tyr-15, Arg-82–Asp-84, and Thr-108–Ser-109 each bind substrate. The active-site Proton donor/acceptor is the His-156. Gln-238 is a binding site for substrate. Ser-286 (proton donor/acceptor) is an active-site residue. Positions 300, 326, 331, and 335 each coordinate substrate.

It belongs to the lyase 1 family. Adenylosuccinate lyase subfamily. Homotetramer. Residues from neighboring subunits contribute catalytic and substrate-binding residues to each active site.

The catalysed reaction is N(6)-(1,2-dicarboxyethyl)-AMP = fumarate + AMP. It carries out the reaction (2S)-2-[5-amino-1-(5-phospho-beta-D-ribosyl)imidazole-4-carboxamido]succinate = 5-amino-1-(5-phospho-beta-D-ribosyl)imidazole-4-carboxamide + fumarate. The protein operates within purine metabolism; AMP biosynthesis via de novo pathway; AMP from IMP: step 2/2. Its pathway is purine metabolism; IMP biosynthesis via de novo pathway; 5-amino-1-(5-phospho-D-ribosyl)imidazole-4-carboxamide from 5-amino-1-(5-phospho-D-ribosyl)imidazole-4-carboxylate: step 2/2. This chain is Adenylosuccinate lyase (ade8), found in Schizosaccharomyces pombe (strain 972 / ATCC 24843) (Fission yeast).